Reading from the N-terminus, the 218-residue chain is uncharacterized protein (218 aa).

This sequence belongs to the glycosyltransferase 2 family.

This is an uncharacterized protein from Mycobacterium bovis (strain ATCC BAA-935 / AF2122/97).